Here is an 868-residue protein sequence, read N- to C-terminus: MQEKYHPQEIEQQARQSWQETGIFNTTEIPDKPKYYCLSMFPYPSGKLHMGHVRNYTIGDVLSRYRRMQGYNVMQPMGWDAFGLPAENAAIQKGVPPAKWTYDNIAYMRSQLQSLGLAIDWKRELATCDPEYYRWNQWLFLRMLEKGIAYQKTQVVNWDPVDQTVLANEQVIDGCGWRTGAVVEKREIPGYYLAITRYADELLAGLENLPGWPERVKAMQANWIGKSYGVDIIFSPDIASGMPQALKVFTTRADTLMGATYVAVAAEHPVALYAAQNQPKLAAFIESCRQGATMEAELALQEKKGMATGLYVLHPLTGERLPVWVANYVLMSYGEGAVMAVPAHDERDFDFARQYALPIRPVIKPEDGELPAPLAQAFTGYGVTFDSGEFSSLKSMDAVDAIATKLKLEEQGEKRVRYRLRDWGISRQRYWGCPIPLVHCDQCGVVPVPDDQLPVTLPEDLVPDGSGNPLTKTPSFYECTCPRCGQQAHRETDTMDTFVDSSWYFIRYACQDQQAAMTDQRANYWLPVDQYIGGIEHAILHLLYSRFWSKVMRDLGLVSFDEPFANLLTQGMVLNEIFFRKTGNGRIQYFNPVEVDVQYDAEGKKIGAVLQADGQPVESGGIGTMSKSKNNGIDPQEIIEQYGADTARLFMMFASPPTQTLEWSDAGVEGAFRFLKRLWRQVYLHRQQGSDMSATDAIPHLEYPADLRDLRCQLHQTIVKVTDDLERRHTFNTAIAAVMELMNKLAGVQDISPAARQLMQEALENSVLLLSPIVPHICHILWRELRPGTELLDQPWPQADEQALIQDEIEIVVQINGKLRGQIRIAREADQATIERIALEHEHVQRNIAGQPIRKVVIVPGRLVNIVV.

A 'HIGH' region motif is present at residues 42–52 (PYPSGKLHMGH). Residues 624–628 (TMSKS) carry the 'KMSKS' region motif. Lys627 contacts ATP.

This sequence belongs to the class-I aminoacyl-tRNA synthetase family.

Its subcellular location is the cytoplasm. It catalyses the reaction tRNA(Leu) + L-leucine + ATP = L-leucyl-tRNA(Leu) + AMP + diphosphate. The polypeptide is Leucine--tRNA ligase (Nitrosomonas eutropha (strain DSM 101675 / C91 / Nm57)).